The following is a 448-amino-acid chain: Adenylosuccinate synthetase (448 aa).

GTP-binding positions include 22 to 28 (GDEGKGK) and 50 to 52 (GHT). Asp23 functions as the Proton acceptor in the catalytic mechanism. Mg(2+) contacts are provided by Asp23 and Gly50. Residues 23–26 (DEGK), 48–51 (NAGH), Thr139, Arg153, Gln234, Thr249, and Arg321 contribute to the IMP site. The active-site Proton donor is the His51. Residue 317-323 (SVTGRPR) coordinates substrate. Residues Arg323, 349–351 (KLD), and 431–433 (STG) each bind GTP.

Belongs to the adenylosuccinate synthetase family. In terms of assembly, homodimer. Mg(2+) serves as cofactor.

The protein localises to the cytoplasm. The catalysed reaction is IMP + L-aspartate + GTP = N(6)-(1,2-dicarboxyethyl)-AMP + GDP + phosphate + 2 H(+). It functions in the pathway purine metabolism; AMP biosynthesis via de novo pathway; AMP from IMP: step 1/2. Functionally, plays an important role in the de novo pathway of purine nucleotide biosynthesis. Catalyzes the first committed step in the biosynthesis of AMP from IMP. The protein is Adenylosuccinate synthetase of Paraburkholderia xenovorans (strain LB400).